Consider the following 105-residue polypeptide: Wound-induced protein 1 (105 aa).

It to potato anionic peroxidase. In terms of tissue distribution, ubiquitous.

This Solanum tuberosum (Potato) protein is Wound-induced protein 1 (WUN1).